Reading from the N-terminus, the 369-residue chain is Aminomethyltransferase (369 aa).

This sequence belongs to the GcvT family. The glycine cleavage system is composed of four proteins: P, T, L and H.

It catalyses the reaction N(6)-[(R)-S(8)-aminomethyldihydrolipoyl]-L-lysyl-[protein] + (6S)-5,6,7,8-tetrahydrofolate = N(6)-[(R)-dihydrolipoyl]-L-lysyl-[protein] + (6R)-5,10-methylene-5,6,7,8-tetrahydrofolate + NH4(+). Its function is as follows. The glycine cleavage system catalyzes the degradation of glycine. The chain is Aminomethyltransferase from Rippkaea orientalis (strain PCC 8801 / RF-1) (Cyanothece sp. (strain PCC 8801)).